The primary structure comprises 158 residues: SsrA-binding protein (158 aa).

A disordered region spans residues 131-158 (GKKTHDKRETEKKRDWNREKARLLRDRG). Positions 136–158 (DKRETEKKRDWNREKARLLRDRG) are enriched in basic and acidic residues.

The protein belongs to the SmpB family.

It is found in the cytoplasm. In terms of biological role, required for rescue of stalled ribosomes mediated by trans-translation. Binds to transfer-messenger RNA (tmRNA), required for stable association of tmRNA with ribosomes. tmRNA and SmpB together mimic tRNA shape, replacing the anticodon stem-loop with SmpB. tmRNA is encoded by the ssrA gene; the 2 termini fold to resemble tRNA(Ala) and it encodes a 'tag peptide', a short internal open reading frame. During trans-translation Ala-aminoacylated tmRNA acts like a tRNA, entering the A-site of stalled ribosomes, displacing the stalled mRNA. The ribosome then switches to translate the ORF on the tmRNA; the nascent peptide is terminated with the 'tag peptide' encoded by the tmRNA and targeted for degradation. The ribosome is freed to recommence translation, which seems to be the essential function of trans-translation. In Brucella ovis (strain ATCC 25840 / 63/290 / NCTC 10512), this protein is SsrA-binding protein.